Here is a 273-residue protein sequence, read N- to C-terminus: HTH-type transcriptional activator RhaS (273 aa).

One can recognise an HTH araC/xylS-type domain in the interval Tyr-174–Gln-272. 2 consecutive DNA-binding regions (H-T-H motif) follow at residues Pro-191–Thr-212 and Val-239–Phe-262.

Binds DNA as a dimer.

It is found in the cytoplasm. Its function is as follows. Activates expression of the rhaBAD and rhaT operons. The polypeptide is HTH-type transcriptional activator RhaS (Yersinia pseudotuberculosis serotype O:1b (strain IP 31758)).